We begin with the raw amino-acid sequence, 431 residues long: MVSLEKNDRVMLARQLPLESVALILAGGRGTRLKDLTNKRAKPAVHFGGKFRIIDFALSNCLNSGIRRIGVITQYQSHTLVQHIQRGWSLFSEEMNEFVDLLPAQQRMKGENWYRGTADAVTQNLDIIRRYKAEYVVILAGDHIYKQDYSRMLIDHVEKGARCTVVCMPVPIKEATAFGVMAVDESDKIIDFVEKPANPPAMPGDASKSLASMGIYVFDADYLYELLAADDKDDASSHDFGKDIIPKITREGMAYAHPFPLSCVQSDPQAEPYWRDVGTLEAYWKANLDLASVTPELDMYDQNWPIRTHMESLPPAKFVQDRSGSHGMTLNSLVSGGCIISGSVVVQSVLFPRVRINSFCNIDSAVLLPEVWVGRSCRLRRCVIDRACIIPEGMVIGENAEEDARRFYRSEEGIVLVTREMLRKLQVKQER.

Lysine 39 contacts beta-D-fructose 1,6-bisphosphate. Positions 40, 46, and 52 each coordinate AMP. An alpha-D-glucose 1-phosphate-binding site is contributed by tyrosine 114. Residue arginine 130 participates in AMP binding. Residues glycine 179, glutamate 194–lysine 195, and serine 212 each bind alpha-D-glucose 1-phosphate. Residues glutamate 370 and arginine 386 each contribute to the AMP site. Beta-D-fructose 1,6-bisphosphate is bound by residues arginine 419–arginine 423 and glutamine 429–arginine 431.

This sequence belongs to the bacterial/plant glucose-1-phosphate adenylyltransferase family. Homotetramer.

It carries out the reaction alpha-D-glucose 1-phosphate + ATP + H(+) = ADP-alpha-D-glucose + diphosphate. The protein operates within glycan biosynthesis; glycogen biosynthesis. With respect to regulation, allosterically activated by fructose-1,6-bisphosphate (F16BP) and inhibited by AMP. Involved in the biosynthesis of ADP-glucose, a building block required for the elongation reactions to produce glycogen. Catalyzes the reaction between ATP and alpha-D-glucose 1-phosphate (G1P) to produce pyrophosphate and ADP-Glc. This chain is Glucose-1-phosphate adenylyltransferase, found in Salmonella dublin (strain CT_02021853).